Reading from the N-terminus, the 469-residue chain is 3-isopropylmalate dehydratase large subunit (469 aa).

[4Fe-4S] cluster contacts are provided by cysteine 350, cysteine 410, and cysteine 413.

This sequence belongs to the aconitase/IPM isomerase family. LeuC type 1 subfamily. As to quaternary structure, heterodimer of LeuC and LeuD. [4Fe-4S] cluster is required as a cofactor.

The catalysed reaction is (2R,3S)-3-isopropylmalate = (2S)-2-isopropylmalate. The protein operates within amino-acid biosynthesis; L-leucine biosynthesis; L-leucine from 3-methyl-2-oxobutanoate: step 2/4. Its function is as follows. Catalyzes the isomerization between 2-isopropylmalate and 3-isopropylmalate, via the formation of 2-isopropylmaleate. This Mesorhizobium japonicum (strain LMG 29417 / CECT 9101 / MAFF 303099) (Mesorhizobium loti (strain MAFF 303099)) protein is 3-isopropylmalate dehydratase large subunit.